Here is a 461-residue protein sequence, read N- to C-terminus: CBL-interacting protein kinase 5 (461 aa).

The 255-residue stretch at Tyr12 to Phe266 folds into the Protein kinase domain. ATP contacts are provided by residues Leu18–Val26 and Lys41. The active-site Proton acceptor is the Asp134. The segment at Asp152–Glu181 is activation loop. An NAF domain is found at Glu300–Glu334. Positions Lys340–Val369 are PPI. Residues His440–Ile461 form a disordered region. The segment covering Ser442 to Ser455 has biased composition (low complexity).

This sequence belongs to the protein kinase superfamily. CAMK Ser/Thr protein kinase family. SNF1 subfamily. The cofactor is Mn(2+).

The catalysed reaction is L-seryl-[protein] + ATP = O-phospho-L-seryl-[protein] + ADP + H(+). The enzyme catalyses L-threonyl-[protein] + ATP = O-phospho-L-threonyl-[protein] + ADP + H(+). In terms of biological role, CIPK serine-threonine protein kinases interact with CBL proteins. Binding of a CBL protein to the regulatory NAF domain of CIPK protein lead to the activation of the kinase in a calcium-dependent manner. The protein is CBL-interacting protein kinase 5 (CIPK5) of Oryza sativa subsp. japonica (Rice).